Here is a 146-residue protein sequence, read N- to C-terminus: Large ribosomal subunit protein bL21 (146 aa).

A compositionally biased stretch (basic residues) spans 95-104 (PKKKTRRKMG). The segment at 95-146 (PKKKTRRKMGHRQELTRVMVKSISISKSTPKSSPKTEATKKSTSSKASKPEN) is disordered. The segment covering 115 to 146 (KSISISKSTPKSSPKTEATKKSTSSKASKPEN) has biased composition (low complexity).

The protein belongs to the bacterial ribosomal protein bL21 family. Part of the 50S ribosomal subunit. Contacts protein L20.

In terms of biological role, this protein binds to 23S rRNA in the presence of protein L20. In Prochlorococcus marinus (strain MIT 9515), this protein is Large ribosomal subunit protein bL21.